A 372-amino-acid polypeptide reads, in one-letter code: GTPase Obg (372 aa).

The Obg domain occupies 1 to 159; sequence MAFVDEAKFF…KWLLIELKLM (159 aa). The interval 121-141 is disordered; it reads GSGGMGNPHFSSGSNRTPRVA. The OBG-type G domain occupies 160–329; the sequence is ADVGLVGLPN…LVKLIGDIID (170 aa). GTP-binding positions include 166-173, 191-195, 213-216, 280-283, and 310-312; these read GLPNAGKS, FTTLE, DIPG, NKCD, and SAI. S173 and T193 together coordinate Mg(2+). The segment at 346 to 372 is disordered; sequence QDLKKQKEEERRQELKKQKEEEQAKDE.

It belongs to the TRAFAC class OBG-HflX-like GTPase superfamily. OBG GTPase family. As to quaternary structure, monomer. Mg(2+) is required as a cofactor.

The protein resides in the cytoplasm. Its function is as follows. An essential GTPase which binds GTP, GDP and possibly (p)ppGpp with moderate affinity, with high nucleotide exchange rates and a fairly low GTP hydrolysis rate. Plays a role in control of the cell cycle, stress response, ribosome biogenesis and in those bacteria that undergo differentiation, in morphogenesis control. The polypeptide is GTPase Obg (Desulfotalea psychrophila (strain LSv54 / DSM 12343)).